Here is a 257-residue protein sequence, read N- to C-terminus: MLAKRIVPCLDVKDGKVVKGVQFRNHAIVGDIVPLAARYAIEGADELVFYDISASAHGKVIDKSWVSRVAEQIDIPFCVAGGIKTLAQAREKLAFGADKISINSPALTDPDLISRLQDEFGRQCIVIGIDSFFDAASNSYKVKQFTGDEAATKDTQWYTQDWVEEVQKRGCGEIVLNVMNQDGVRGGYDIKQLSMVRSICDVPLIASGGAGTMAHFKDVFEQAKVDAALAASVFHKGIIDIGELKQYLHANNIAIRL.

Catalysis depends on residues Asp-11 and Asp-130.

It belongs to the HisA/HisF family. As to quaternary structure, heterodimer of HisH and HisF.

The protein localises to the cytoplasm. It carries out the reaction 5-[(5-phospho-1-deoxy-D-ribulos-1-ylimino)methylamino]-1-(5-phospho-beta-D-ribosyl)imidazole-4-carboxamide + L-glutamine = D-erythro-1-(imidazol-4-yl)glycerol 3-phosphate + 5-amino-1-(5-phospho-beta-D-ribosyl)imidazole-4-carboxamide + L-glutamate + H(+). The protein operates within amino-acid biosynthesis; L-histidine biosynthesis; L-histidine from 5-phospho-alpha-D-ribose 1-diphosphate: step 5/9. In terms of biological role, IGPS catalyzes the conversion of PRFAR and glutamine to IGP, AICAR and glutamate. The HisF subunit catalyzes the cyclization activity that produces IGP and AICAR from PRFAR using the ammonia provided by the HisH subunit. This Shewanella denitrificans (strain OS217 / ATCC BAA-1090 / DSM 15013) protein is Imidazole glycerol phosphate synthase subunit HisF.